The primary structure comprises 503 residues: Putative ribose/galactose/methyl galactoside import ATP-binding protein (503 aa).

ABC transporter domains follow at residues L7–E244 and V254–L498. G39 to S46 lines the ATP pocket.

The protein belongs to the ABC transporter superfamily. Carbohydrate importer 2 (CUT2) (TC 3.A.1.2) family.

It localises to the cell membrane. It catalyses the reaction D-ribose(out) + ATP + H2O = D-ribose(in) + ADP + phosphate + H(+). The catalysed reaction is D-galactose(out) + ATP + H2O = D-galactose(in) + ADP + phosphate + H(+). In terms of biological role, part of an ABC transporter complex involved in carbohydrate import. Could be involved in ribose, galactose and/or methyl galactoside import. Responsible for energy coupling to the transport system. The polypeptide is Putative ribose/galactose/methyl galactoside import ATP-binding protein (Geobacillus kaustophilus (strain HTA426)).